The primary structure comprises 267 residues: Thiamine thiazole synthase (267 aa).

Residues Ser41, 60–61 (ER), Gly68, Val132, and 160–162 (HVD) contribute to the NAD(+) site. Asp162 and His177 together coordinate Fe cation. Met227 contributes to the NAD(+) binding site. Residue Arg237 participates in glycine binding.

It belongs to the THI4 family. Homooctamer; tetramer of dimers. Fe(2+) serves as cofactor.

The enzyme catalyses hydrogen sulfide + glycine + NAD(+) = ADP-5-ethyl-4-methylthiazole-2-carboxylate + nicotinamide + 3 H2O + H(+). The protein operates within cofactor biosynthesis; thiamine diphosphate biosynthesis. In terms of biological role, involved in the biosynthesis of the thiazole moiety of thiamine. Catalyzes the conversion of NAD and glycine to adenosine diphosphate 5-(2-hydroxyethyl)-4-methylthiazole-2-carboxylate (ADT), an adenylated thiazole intermediate, using free sulfide as a source of sulfur. This is Thiamine thiazole synthase from Saccharolobus islandicus (strain L.S.2.15 / Lassen #1) (Sulfolobus islandicus).